The following is a 152-amino-acid chain: Proteolipid protein 2 (152 aa).

The N-linked (GlcNAc...) asparagine glycan is linked to Asn18. Residues 19 to 137 enclose the MARVEL domain; sequence FSRTRKGILL…DAYVTFPVRQ (119 aa). 3 helical membrane-spanning segments follow: residues 25 to 45, 48 to 68, and 85 to 105; these read GILL…FSAS, GYSS…VVYM, and FFRT…VLVE. N-linked (GlcNAc...) asparagine glycosylation is present at Asn108. A helical transmembrane segment spans residues 112 to 132; it reads IVAGVLGLIATCLFGYDAYVT.

In terms of tissue distribution, enriched in colonic mucosa. The expression of A4 follows a gradient along the crypto-villus axis with the most abundant message occurring in the lower half of the crypt.

It localises to the membrane. Functionally, may play a role in cell differentiation in the intestinal epithelium. This chain is Proteolipid protein 2 (PLP2), found in Homo sapiens (Human).